Consider the following 57-residue polypeptide: UPF0391 membrane protein RPA3029 (57 aa).

Helical transmembrane passes span 6 to 26 (WALIFLVVSIIAGIFGFTGIS) and 35 to 55 (ILFYVFVVIFVVLLILGFTIF).

It belongs to the UPF0391 family.

It is found in the cell membrane. The sequence is that of UPF0391 membrane protein RPA3029 from Rhodopseudomonas palustris (strain ATCC BAA-98 / CGA009).